A 316-amino-acid polypeptide reads, in one-letter code: Homoserine kinase (316 aa).

ATP is bound at residue 96 to 106 (PHGRGLGSSGA).

This sequence belongs to the GHMP kinase family. Homoserine kinase subfamily.

Its subcellular location is the cytoplasm. It catalyses the reaction L-homoserine + ATP = O-phospho-L-homoserine + ADP + H(+). The protein operates within amino-acid biosynthesis; L-threonine biosynthesis; L-threonine from L-aspartate: step 4/5. Functionally, catalyzes the ATP-dependent phosphorylation of L-homoserine to L-homoserine phosphate. In Clavibacter michiganensis subsp. michiganensis (strain NCPPB 382), this protein is Homoserine kinase.